The chain runs to 133 residues: Small ribosomal subunit protein eS8 (133 aa).

Residues 1-31 (MGFYQGPDNRKITGGLKGKHRDKRKYEIGNP) are disordered.

The protein belongs to the eukaryotic ribosomal protein eS8 family. In terms of assembly, part of the 30S ribosomal subunit.

The protein is Small ribosomal subunit protein eS8 of Saccharolobus solfataricus (strain ATCC 35092 / DSM 1617 / JCM 11322 / P2) (Sulfolobus solfataricus).